The sequence spans 122 residues: Large ribosomal subunit protein uL22 (122 aa).

The protein belongs to the universal ribosomal protein uL22 family. In terms of assembly, part of the 50S ribosomal subunit.

In terms of biological role, this protein binds specifically to 23S rRNA; its binding is stimulated by other ribosomal proteins, e.g. L4, L17, and L20. It is important during the early stages of 50S assembly. It makes multiple contacts with different domains of the 23S rRNA in the assembled 50S subunit and ribosome. The globular domain of the protein is located near the polypeptide exit tunnel on the outside of the subunit, while an extended beta-hairpin is found that lines the wall of the exit tunnel in the center of the 70S ribosome. In Prochlorococcus marinus (strain MIT 9303), this protein is Large ribosomal subunit protein uL22.